Reading from the N-terminus, the 294-residue chain is MTQRHWLELTLIADNDDDVLLLETALECAGAVAVTYQAANEEEIFEPEIGTTPMWSKTGVTGLFPLDTDPNAVIELLMQALGEDYPIAQHLLPESDWTRAWLEHFQPIAFGNHFWVAASEHVIEEHDAKVLRLDPGLAFGTGTHPSTAMCLHYLVNHAALHGKTVYDYGCGSGILGIAAAMMGAKAVYQTDIDPQALTASYENAQKNQVAEKIFLCEQPDLAPAVDLLVANILLEPLCALRAQFEKHLHAQSVMIFSGLLERQQQKLEQAYQDHYRIERINCRAGWILLRLTSL.

4 residues coordinate S-adenosyl-L-methionine: T147, G169, D191, and N231.

It belongs to the methyltransferase superfamily. PrmA family.

Its subcellular location is the cytoplasm. The enzyme catalyses L-lysyl-[protein] + 3 S-adenosyl-L-methionine = N(6),N(6),N(6)-trimethyl-L-lysyl-[protein] + 3 S-adenosyl-L-homocysteine + 3 H(+). In terms of biological role, methylates ribosomal protein L11. The chain is Ribosomal protein L11 methyltransferase from Dichelobacter nodosus (strain VCS1703A).